The chain runs to 545 residues: MASTRARPMLPLLLVLVAVVIPGPVGAQVSIHPTEAFLPRGGSVQVNCSSSCEDENLGLGLETNWMKDELSSGHNWKLFKLSDIGEDSRPLCFENCGTTQSSASATITVYSFPERVELDPLPAWQQVGKNLILRCLVEGGAPRTQLSVVLLRGNETLSRQAVDGDPKEITFTVLASRGDHGANFSCFTELDLRPQGLSLFKNVSEVRQLRTFDLPTRVLKLDTPDLLEVGTQQKFLCSLEGLFPASEAQIYLEMGGQMLTLESTNSRDFVSATASVEVTEKLDRTLQLRCVLELADQTLEMEKTLRIYNFSAPILTLSQPEVSEGDQVTVKCEAHGGAQVVLLNSTSPRPPTSQGTSPRPPTSQIQFTLNASPEDHKRRFFCSAALEVDGKSLFKNQTLELHVLYGPHLDKKDCLGNWTWQEGSQQTLTCQPQGNPAPNLTCSRKADGVPLPIGMVKSVKREMNGTYKCRAFSSRGSITRDVHLTVLYHDQNTWVIIVGVLVLIIAGFVIVASIYTYYRQRKIRIYKLQKAQEEALKLKVQAPPP.

An N-terminal signal peptide occupies residues 1 to 27 (MASTRARPMLPLLLVLVAVVIPGPVGA). Residues 28-492 (QVSIHPTEAF…HLTVLYHDQN (465 aa)) lie on the Extracellular side of the membrane. Ig-like C2-type domains follow at residues 41-103 (GGSV…QSSA) and 128-193 (GKNL…LDLR). An N-linked (GlcNAc...) asparagine glycan is attached at Asn-47. Cystine bridges form between Cys-48-Cys-92, Cys-52-Cys-96, and Cys-135-Cys-186. N-linked (GlcNAc...) asparagine glycosylation occurs at Asn-154. The short motif at 177-179 (RGD) is the Cell attachment site element. N-linked (GlcNAc...) asparagine glycosylation is found at Asn-183 and Asn-202. Residues 230–297 (GTQQKFLCSL…LRCVLELADQ (68 aa)) enclose the Ig-like C2-type 3 domain. The cysteines at positions 237 and 290 are disulfide-linked. N-linked (GlcNAc...) asparagine glycosylation is found at Asn-309, Asn-344, Asn-396, Asn-417, Asn-439, and Asn-464. The 65-residue stretch at 325-389 (GDQVTVKCEA…FFCSAALEVD (65 aa)) folds into the Ig-like C2-type 4 domain. A disulfide bridge links Cys-332 with Cys-382. The interval 343–365 (LNSTSPRPPTSQGTSPRPPTSQI) is disordered. 3 cysteine pairs are disulfide-bonded: Cys-414-Cys-430, Cys-430-Cys-469, and Cys-442-Cys-469. The 54-residue stretch at 423-476 (GSQQTLTCQPQGNPAPNLTCSRKADGVPLPIGMVKSVKREMNGTYKCRAFSSRG) folds into the Ig-like C2-type 5 domain. The helical transmembrane segment at 493 to 517 (TWVIIVGVLVLIIAGFVIVASIYTY) threads the bilayer. Topologically, residues 518 to 545 (YRQRKIRIYKLQKAQEEALKLKVQAPPP) are cytoplasmic.

This sequence belongs to the immunoglobulin superfamily. ICAM family. As to quaternary structure, homodimer. Interacts with MUC1 and promotes cell aggregation in epithelial cells. Interacts with ARHGEF26/SGEF. Interacts (on T cell side) with CD81, CD247 and CD9 at immunological synapses between antigen-presenting cells and T cells. Monoubiquitinated, which is promoted by MARCH9 and leads to endocytosis.

The protein localises to the membrane. Functionally, ICAM proteins are ligands for the leukocyte adhesion protein LFA-1 (integrin alpha-L/beta-2). During leukocyte trans-endothelial migration, ICAM1 engagement promotes the assembly of endothelial apical cups through ARHGEF26/SGEF and RHOG activation. This chain is Intercellular adhesion molecule 1 (Icam1), found in Rattus norvegicus (Rat).